Here is a 243-residue protein sequence, read N- to C-terminus: MDIEICIDNIESALIAQNSGADRLEVCGCLALGGVTPPYSLIKTVLDVCNIPCYVMIRPRSGDFLFNAHEIKMMEQDIHIAKQLGAQGVVIGALTENGEIDLSICHRLISAAEGLGVTFHRAFDLCSDPYHGLEQLIELGCERVLTSGQQRTAFEGRYVLKTLVQQAKGRIKIMAGAGVNPNNALELVKISKVDELHLSAKTFRQSSMKGNSSVTMGNKAEDDYKIWTTDRNQIIAIKKLFQE.

This sequence belongs to the CutC family.

It is found in the cytoplasm. The polypeptide is PF03932 family protein CutC (Histophilus somni (strain 2336) (Haemophilus somnus)).